We begin with the raw amino-acid sequence, 873 residues long: Paramyosin (873 aa).

Residues 1 to 25 (MSSRSSKYMYKSSGGAGDISIEYGT) are nonhelical region. A coiled-coil region spans residues 26-852 (DLGALTRLED…IRAKHRSWVT (827 aa)). Residues 853–873 (TSQVPGGTRQVFVTEESSQNF) form a nonhelical region region.

Belongs to the paramyosin family. As to quaternary structure, homodimer. Binds IgG and collagen. Expressed in all tissues except in saliva.

It localises to the cytoplasm. It is found in the myofibril. Functionally, paramyosin is a major structural component of many thick filaments isolated from invertebrate muscles. The protein is Paramyosin (PRM) of Rhipicephalus microplus (Cattle tick).